A 265-amino-acid chain; its full sequence is 3-methyl-2-oxobutanoate hydroxymethyltransferase (265 aa).

The Mg(2+) site is built by Asp-45 and Asp-84. 3-methyl-2-oxobutanoate is bound by residues 45-46 (DS), Asp-84, and Lys-112. Position 114 (Glu-114) interacts with Mg(2+). Glu-181 (proton acceptor) is an active-site residue.

This sequence belongs to the PanB family. As to quaternary structure, homodecamer; pentamer of dimers. The cofactor is Mg(2+).

It localises to the cytoplasm. The catalysed reaction is 3-methyl-2-oxobutanoate + (6R)-5,10-methylene-5,6,7,8-tetrahydrofolate + H2O = 2-dehydropantoate + (6S)-5,6,7,8-tetrahydrofolate. The protein operates within cofactor biosynthesis; (R)-pantothenate biosynthesis; (R)-pantoate from 3-methyl-2-oxobutanoate: step 1/2. In terms of biological role, catalyzes the reversible reaction in which hydroxymethyl group from 5,10-methylenetetrahydrofolate is transferred onto alpha-ketoisovalerate to form ketopantoate. The chain is 3-methyl-2-oxobutanoate hydroxymethyltransferase from Yersinia enterocolitica serotype O:8 / biotype 1B (strain NCTC 13174 / 8081).